The following is a 375-amino-acid chain: 23S rRNA (uracil(747)-C(5))-methyltransferase RlmC (375 aa).

4 residues coordinate [4Fe-4S] cluster: Cys3, Cys11, Cys14, and Cys87. Positions 212, 241, 262, and 307 each coordinate S-adenosyl-L-methionine. Cys334 serves as the catalytic Nucleophile.

It belongs to the class I-like SAM-binding methyltransferase superfamily. RNA M5U methyltransferase family. RlmC subfamily.

The enzyme catalyses uridine(747) in 23S rRNA + S-adenosyl-L-methionine = 5-methyluridine(747) in 23S rRNA + S-adenosyl-L-homocysteine + H(+). Its function is as follows. Catalyzes the formation of 5-methyl-uridine at position 747 (m5U747) in 23S rRNA. The polypeptide is 23S rRNA (uracil(747)-C(5))-methyltransferase RlmC (Vibrio cholerae serotype O1 (strain ATCC 39541 / Classical Ogawa 395 / O395)).